A 267-amino-acid chain; its full sequence is Cyclin-C (267 aa).

In terms of domain architecture, Cyclin N-terminal spans 48–151; that stretch reads IQVLGEQLKL…LLENLDCCLI (104 aa).

This sequence belongs to the cyclin family. Cyclin C subfamily. Component of the Cdk8 module of the Mediator complex.

The protein resides in the nucleus. Component of the Mediator complex, a coactivator involved in regulated gene transcription of nearly all RNA polymerase II-dependent genes. Mediator functions as a bridge to convey information from gene-specific regulatory proteins to the basal RNA polymerase II transcription machinery. Mediator is recruited to promoters by direct interactions with regulatory proteins and serves as a scaffold for the assembly of a functional preinitiation complex with RNA polymerase II and the general transcription factors. Binds to and activates cyclin-dependent kinase Cdk8 that phosphorylates the CTD (C-terminal domain) of the large subunit of RNA polymerase II (RNAp II), which may inhibit the formation of a transcription initiation complex. This is Cyclin-C (CycC) from Drosophila pseudoobscura pseudoobscura (Fruit fly).